We begin with the raw amino-acid sequence, 439 residues long: Fibulin-7 (439 aa).

An N-terminal signal peptide occupies residues 1 to 24; the sequence is MVPSSPRALFLLLLILACPEPRAS. Positions 28–53 form a coiled coil; it reads LSKQQLLSAIRQLQQLLKGQETRFAE. Positions 79 to 136 constitute a Sushi domain; that stretch reads VSCPALNTPADGRKFGSKYLVDHEVHFTCNPGFRLVGPSSVVCLPNGTWTGEQPHCRG. Cystine bridges form between Cys-81/Cys-121, Cys-107/Cys-134, Cys-140/Cys-151, Cys-145/Cys-160, Cys-162/Cys-171, Cys-228/Cys-244, Cys-240/Cys-253, Cys-255/Cys-268, Cys-274/Cys-287, Cys-281/Cys-296, and Cys-301/Cys-318. Asn-124 carries an N-linked (GlcNAc...) asparagine glycan. Residues 136–172 form the EGF-like 1; calcium-binding domain; sequence GISECSSQPCQNGGTCVEGVNQYRCICPPGRTGNRCQ. One can recognise an EGF-like 2; calcium-binding domain in the interval 224–269; sequence DVNECELYGQEGRPRLCMHACVNTPGSYRCTCPGGYRTLADGKSCE. An EGF-like 3; calcium-binding domain is found at 270–319; the sequence is DVDECVGLQPVCPQGTTCINTGGSFQCVSPECPEGSGNVSYVKTSPFQCE. An N-linked (GlcNAc...) asparagine glycan is attached at Asn-307.

It belongs to the fibulin family. In terms of assembly, interacts with heparin, FBLN1, FN1 and DSPP. Preferentially binds dental mesenchyme cells and odontoblasts but not dental epithelial cells or nondental cells. Binding requires a heparan sulfate-containing receptor on the cell surface as well as an integrin. N-glycosylated.

The protein localises to the secreted. It localises to the extracellular space. The protein resides in the extracellular matrix. Functionally, an adhesion molecule that interacts with extracellular matrix molecules in developing teeth and may play important roles in differentiation and maintenance of odontoblasts as well as in dentin formation. This Homo sapiens (Human) protein is Fibulin-7 (FBLN7).